Here is an 825-residue protein sequence, read N- to C-terminus: AMP deaminase 2 (825 aa).

Positions 1-49 are disordered; the sequence is MASYPSGSGKPKAKYPFKKRASLQASTAAPEARGGLGAPPLQSARSLPG. Basic residues predominate over residues 11–21; the sequence is PKAKYPFKKRA. Phosphoserine is present on Ser-22. Arg-45 is subject to Omega-N-methylarginine. Phosphoserine is present on residues Ser-46, Ser-64, and Ser-80. At Tyr-91 the chain carries Phosphotyrosine. Ser-97 and Ser-114 each carry phosphoserine. Phosphothreonine is present on Thr-134. 2 positions are modified to phosphoserine: Ser-136 and Ser-138. Zn(2+) contacts are provided by His-364 and His-366. Substrate is bound by residues His-366 and 435-440; that span reads KFNAKY. His-633 is a Zn(2+) binding site. Substrate is bound at residue Glu-636. His-655 serves as the catalytic Proton acceptor. Asp-710 serves as a coordination point for Zn(2+). 711–714 lines the substrate pocket; it reads DPLQ.

The protein belongs to the metallo-dependent hydrolases superfamily. Adenosine and AMP deaminases family. Homotetramer. It depends on Zn(2+) as a cofactor. As to expression, highly expressed in cerebellum.

The catalysed reaction is AMP + H2O + H(+) = IMP + NH4(+). It functions in the pathway purine metabolism; IMP biosynthesis via salvage pathway; IMP from AMP: step 1/1. Its function is as follows. AMP deaminase plays a critical role in energy metabolism. Catalyzes the deamination of AMP to IMP and plays an important role in the purine nucleotide cycle. The sequence is that of AMP deaminase 2 from Homo sapiens (Human).